Reading from the N-terminus, the 155-residue chain is SsrA-binding protein (155 aa).

Belongs to the SmpB family.

It localises to the cytoplasm. Functionally, required for rescue of stalled ribosomes mediated by trans-translation. Binds to transfer-messenger RNA (tmRNA), required for stable association of tmRNA with ribosomes. tmRNA and SmpB together mimic tRNA shape, replacing the anticodon stem-loop with SmpB. tmRNA is encoded by the ssrA gene; the 2 termini fold to resemble tRNA(Ala) and it encodes a 'tag peptide', a short internal open reading frame. During trans-translation Ala-aminoacylated tmRNA acts like a tRNA, entering the A-site of stalled ribosomes, displacing the stalled mRNA. The ribosome then switches to translate the ORF on the tmRNA; the nascent peptide is terminated with the 'tag peptide' encoded by the tmRNA and targeted for degradation. The ribosome is freed to recommence translation, which seems to be the essential function of trans-translation. This chain is SsrA-binding protein, found in Geobacillus kaustophilus (strain HTA426).